We begin with the raw amino-acid sequence, 366 residues long: Glucan organizing enzyme 1 (366 aa).

Topologically, residues 1–24 (MLPLWARGGKPIVIPLPQKRHITL) are extracellular. The helical transmembrane segment at 25 to 45 (PALPILLLLLGTGFLLHSLFF) threads the bilayer. Residues 46–366 (PPPPPHPPGK…ETYKKWKRGH (321 aa)) lie on the Cytoplasmic side of the membrane.

This sequence belongs to the glycosyltransferase 32 family.

The protein localises to the cell membrane. Its function is as follows. Plays a role in the localization of glycogen rosettes to the plasma membrane. Required for correct cell wall organization and may facilitate the connection between beta-1,3-glucan and beta-1,6-glucan in the cell wall. The polypeptide is Glucan organizing enzyme 1 (Cryptococcus neoformans var. grubii serotype A (strain H99 / ATCC 208821 / CBS 10515 / FGSC 9487) (Filobasidiella neoformans var. grubii)).